The chain runs to 316 residues: Aspartate carbamoyltransferase catalytic subunit (316 aa).

Carbamoyl phosphate contacts are provided by Arg-58 and Thr-59. Residue Lys-86 participates in L-aspartate binding. Residues Arg-108, His-136, and Gln-139 each contribute to the carbamoyl phosphate site. 2 residues coordinate L-aspartate: Arg-169 and Arg-223. Gly-264 and Pro-265 together coordinate carbamoyl phosphate.

Belongs to the aspartate/ornithine carbamoyltransferase superfamily. ATCase family. In terms of assembly, heterododecamer (2C3:3R2) of six catalytic PyrB chains organized as two trimers (C3), and six regulatory PyrI chains organized as three dimers (R2).

It catalyses the reaction carbamoyl phosphate + L-aspartate = N-carbamoyl-L-aspartate + phosphate + H(+). The protein operates within pyrimidine metabolism; UMP biosynthesis via de novo pathway; (S)-dihydroorotate from bicarbonate: step 2/3. Its function is as follows. Catalyzes the condensation of carbamoyl phosphate and aspartate to form carbamoyl aspartate and inorganic phosphate, the committed step in the de novo pyrimidine nucleotide biosynthesis pathway. The polypeptide is Aspartate carbamoyltransferase catalytic subunit (Dinoroseobacter shibae (strain DSM 16493 / NCIMB 14021 / DFL 12)).